We begin with the raw amino-acid sequence, 183 residues long: Inner membrane protein p54 (183 aa).

A helical membrane pass occupies residues 32 to 52 (YTILIAIVVLVIIIIVLIYLF). Positions 81-157 (EVTPQPGTSK…PYTTVTTQNT (77 aa)) are disordered. A compositionally biased stretch (polar residues) spans 111–122 (RPATNKPVTDNP). The segment covering 130–143 (ATGGPAAAPAAASA) has biased composition (low complexity). The tract at residues 149–161 (YTTVTTQNTASQT) is interaction with host DYNLL1.

This sequence belongs to the asfivirus envelope protein p54 family. Interacts with the host light chain cytoplasmic dynein DYNLL1; this interaction is critical for intracellular microtubule-dependent virus transport toward viral factories.

It is found in the virion membrane. It localises to the host cytoplasm. The protein localises to the host cytoskeleton. The protein resides in the host endoplasmic reticulum membrane. In terms of biological role, inner envelope protein involved, through its interaction with host dynein, in the intracellular microtubule-dependent transport of viral capsid toward viral factories. Seems to induce caspase-3 activation and apoptosis. Plays a role in virion morphogenesis by recruiting and transforming the host ER membranes into the precursors of the viral envelope. Involved in virus attachment to the host cell. This chain is Inner membrane protein p54, found in African swine fever virus (strain Badajoz 1971 Vero-adapted) (Ba71V).